The primary structure comprises 329 residues: UDP-2,3-diacylglucosamine pyrophosphatase LpxG (329 aa).

The chain crosses the membrane as a helical span at residues 2–24 (FVSVGITASLTTILAAPVLTWVW). Residues aspartate 59, histidine 61, aspartate 91, asparagine 123, histidine 257, and histidine 259 each contribute to the a divalent metal cation site.

It belongs to the metallophosphoesterase superfamily. LpxG family. It depends on Mn(2+) as a cofactor.

Its subcellular location is the cell inner membrane. It catalyses the reaction UDP-2,3-diacyl-alpha-D-glucosamine + H2O = 2,3-diacyl-alpha-D-glucosaminyl 1-phosphate + UMP + 2 H(+). Its pathway is glycolipid biosynthesis; lipid IV(A) biosynthesis. Its function is as follows. Hydrolyzes the pyrophosphate bond of UDP-2,3-diacylglucosamine to form 2,3-diacylglucosamine 1-phosphate (lipid X) and UMP by catalyzing the attack of water at the alpha-P atom. Involved in the biosynthesis of lipid A, a phosphorylated glycolipid that anchors the lipooligosaccharide (LOS) to the outer membrane of the cell. Can functionally complement lpxH deficiency in E.coli. Overexpression of LpxG results in toxic accumulation of lipid X and profoundly reduces the infectivity of C.trachomatis. Can utilize UDP-2-N,3-O-bis((3R)-3-hydroxytetradecanoyl)-alpha-D-glucosamine as substrate in vitro, but the substrate is likely UDP-2-N-((3R)-3-hydroxyicosanoyl),3-O-(tetradecanoyl)-alpha-D-glucosamine in vivo. This Chlamydia trachomatis serovar D (strain ATCC VR-885 / DSM 19411 / UW-3/Cx) protein is UDP-2,3-diacylglucosamine pyrophosphatase LpxG.